Here is a 190-residue protein sequence, read N- to C-terminus: Vascular endothelial growth factor A (190 aa).

Positions 1–26 are cleaved as a signal peptide; it reads MNFLLSWVHWSLALLLYLHHAKWSQA. 3 disulfides stabilise this stretch: C51/C93, C82/C127, and C86/C129. An N-linked (GlcNAc...) asparagine glycan is attached at N100.

It belongs to the PDGF/VEGF growth factor family. In terms of assembly, homodimer; disulfide-linked. Also found as heterodimer with PGF. Interacts with NRP1. Interacts with BSG. Interacts with CD82; this interaction inhibits VEGFA-mediated signaling pathway.

It is found in the secreted. In terms of biological role, growth factor active in angiogenesis, vasculogenesis and endothelial cell growth. Induces endothelial cell proliferation, promotes cell migration, inhibits apoptosis and induces permeabilization of blood vessels. Binds to the FLT1/VEGFR1 and KDR/VEGFR2 receptors, heparan sulfate and heparin. Binding to NRP1 receptor initiates a signaling pathway needed for motor neuron axon guidance and cell body migration, including for the caudal migration of facial motor neurons from rhombomere 4 to rhombomere 6 during embryonic development. Also binds the DEAR/FBXW7-AS1 receptor. The chain is Vascular endothelial growth factor A (VEGFA) from Sus scrofa (Pig).